A 177-amino-acid polypeptide reads, in one-letter code: Ribonuclease H (177 aa).

Residues 1–142 (MSKQVEIFTD…ADELAREGMA (142 aa)) form the RNase H type-1 domain. 4 residues coordinate Mg(2+): Asp-10, Glu-48, Asp-70, and Asp-134. Positions 126 to 138 (GHTENERADELAR) are enriched in basic and acidic residues. The interval 126–177 (GHTENERADELAREGMAPFKKGSFKPAASAPKPDAQLKQPVATKARRSTQSY) is disordered.

Belongs to the RNase H family. Monomer. Mg(2+) is required as a cofactor.

Its subcellular location is the cytoplasm. The enzyme catalyses Endonucleolytic cleavage to 5'-phosphomonoester.. Endonuclease that specifically degrades the RNA of RNA-DNA hybrids. The protein is Ribonuclease H of Mesorhizobium japonicum (strain LMG 29417 / CECT 9101 / MAFF 303099) (Mesorhizobium loti (strain MAFF 303099)).